The chain runs to 399 residues: Dihydrolipoyllysine-residue succinyltransferase component of 2-oxoglutarate dehydrogenase complex (399 aa).

The Lipoyl-binding domain occupies 2–77 (AIDIKAPTFP…LSGELLGKLT (76 aa)). Lys43 carries the post-translational modification N6-lipoyllysine. Positions 104–141 (ILSPAARKIAEENAIAADSITGTGKGGRVTKEDAVAAA) constitute a Peripheral subunit-binding (PSBD) domain. Catalysis depends on residues His370 and Asp374.

The protein belongs to the 2-oxoacid dehydrogenase family. Forms a 24-polypeptide structural core with octahedral symmetry. Part of the 2-oxoglutarate dehydrogenase (OGDH) complex composed of E1 (2-oxoglutarate dehydrogenase), E2 (dihydrolipoamide succinyltransferase) and E3 (dihydrolipoamide dehydrogenase); the complex contains multiple copies of the three enzymatic components (E1, E2 and E3). (R)-lipoate serves as cofactor.

The enzyme catalyses N(6)-[(R)-dihydrolipoyl]-L-lysyl-[protein] + succinyl-CoA = N(6)-[(R)-S(8)-succinyldihydrolipoyl]-L-lysyl-[protein] + CoA. It functions in the pathway amino-acid degradation; L-lysine degradation via saccharopine pathway; glutaryl-CoA from L-lysine: step 6/6. E2 component of the 2-oxoglutarate dehydrogenase (OGDH) complex which catalyzes the second step in the conversion of 2-oxoglutarate to succinyl-CoA and CO(2). The polypeptide is Dihydrolipoyllysine-residue succinyltransferase component of 2-oxoglutarate dehydrogenase complex (sucB) (Azotobacter vinelandii).